We begin with the raw amino-acid sequence, 970 residues long: Longitudinals lacking protein, isoforms F/I/K/T (970 aa).

The BTB domain occupies 32 to 97 (VDCTLAAEGK…MYRGEVNISQ (66 aa)). Disordered stretches follow at residues 115–200 (LSDN…SSVL), 228–340 (SSGP…ASAS), 447–468 (DAQQRDPQASKQDKGEQTEGAQ), and 790–843 (QTVH…LQDD). Low complexity-rich tracts occupy residues 162 to 175 (SGDVSGSREGSSSP), 228 to 251 (SSGPAAGTSSQASSTQQQQPLTST), 263 to 293 (TSSTAAPASGASASAAVQQAHLHQQQAQTTS), and 329 to 340 (NSATGPNPASAS). Composition is skewed to polar residues over residues 447 to 456 (DAQQRDPQAS) and 808 to 818 (QLQTHHIQTVV). Low complexity predominate over residues 819–828 (QSSSGQQQHD). Residues 903-925 (YVCRHCGKKYRWKSTLRRHENVE) form a C2H2-type 1; degenerate zinc finger. The C2H2-type 2 zinc finger occupies 933–955 (HPCPYCSYKAKQRGNLGVHVRKH).

As to expression, by stage 11, isoform F is expressed throughout the mesoderm whereas isoform T, and at low levels isoform I, is expressed throughout the ectoderm. Isoform K is expressed in both mesoderm and ectoderm. Expression becomes restricted during later stages; starting from stage 14 to 15, isoform F is expressed in the gut. Isoform I is expressed in the CNS. Isoform I and isoform F show expression in the epithelium starting at stage 14, though for isoform I the CNS expression remains predominant. Expression is also seen in specific types of cells in the embryo; isoform K is expressed in the ventral furrow at stage 5 and in a dynamic pattern in the ventral neurogenic region starting at stage 7. Isoform T is expressed around the tracheal pits at stage 11. Isoform F shows transient enrichment in a dorsal cell layer in the CNS at stages 13 and 14.

It is found in the nucleus. Its function is as follows. Putative transcription factor required for axon growth and guidance in the central and peripheral nervous systems. Repels CNS axons away from the midline by promoting the expression of the midline repellent sli and its receptor robo. In Drosophila melanogaster (Fruit fly), this protein is Longitudinals lacking protein, isoforms F/I/K/T.